The primary structure comprises 782 residues: Coiled-coil alpha-helical rod protein 1 (782 aa).

Composition is skewed to basic and acidic residues over residues 62 to 74 (ERDV…EPGR) and 208 to 218 (ETRRAGEAKEL). 2 disordered regions span residues 62-82 (ERDV…WGLE) and 177-218 (EQLS…AKEL). 3 coiled-coil regions span residues 82 to 314 (EGSQ…ELTR), 344 to 437 (LMVQ…NAVS), and 498 to 691 (VADV…QQEG).

It is found in the cytoplasm. The protein localises to the nucleus. In terms of biological role, may be a regulator of keratinocyte proliferation or differentiation. This Pan troglodytes (Chimpanzee) protein is Coiled-coil alpha-helical rod protein 1 (CCHCR1).